An 85-amino-acid polypeptide reads, in one-letter code: Toxin To6 (85 aa).

A signal peptide spans 1–20 (MSIFPIILALLLIGLDEGEA). The LCN-type CS-alpha/beta domain maps to 21–83 (LDGYPLSKNN…EMYPGRLPCN (63 aa)). Intrachain disulfides connect C32/C82, C36/C59, C42/C64, and C46/C66.

In terms of tissue distribution, expressed by the venom gland.

The protein resides in the secreted. Functionally, beta toxins bind voltage-independently at site-4 of sodium channels (Nav) and shift the voltage of activation toward more negative potentials thereby affecting sodium channel activation and promoting spontaneous and repetitive firing. The protein is Toxin To6 of Tityus obscurus (Amazonian scorpion).